Reading from the N-terminus, the 921-residue chain is Eukaryotic translation initiation factor 3 subunit A (921 aa).

The 175-residue stretch at 319 to 493 (FKFYASQLVL…GVVSFMEDPF (175 aa)) folds into the PCI domain. Positions 497–524 (GGSTATNADDEQRNDDGYEETHVEEEPE) are disordered. The span at 506–517 (DEQRNDDGYEET) shows a compositional bias: basic and acidic residues. Coiled-coil stretches lie at residues 562–647 (ARNE…NEKT) and 693–868 (ERMS…IKRN). A compositionally biased stretch (basic and acidic residues) spans 818–865 (AAKEHDDRQRMLQDRLTKERKERERVNKEKDEAARKQREIEEAVERTI). The tract at residues 818-921 (AAKEHDDRQR…KMKLRRAGRA (104 aa)) is disordered. A compositionally biased stretch (pro residues) spans 873 to 890 (PAPPVRSAPPARAAPPPR). The span at 903–913 (PEKKLTYAEKM) shows a compositional bias: basic and acidic residues.

This sequence belongs to the eIF-3 subunit A family. As to quaternary structure, component of the eukaryotic translation initiation factor 3 (eIF-3) complex.

Its subcellular location is the cytoplasm. Its function is as follows. RNA-binding component of the eukaryotic translation initiation factor 3 (eIF-3) complex, which is involved in protein synthesis of a specialized repertoire of mRNAs and, together with other initiation factors, stimulates binding of mRNA and methionyl-tRNAi to the 40S ribosome. The eIF-3 complex specifically targets and initiates translation of a subset of mRNAs involved in cell proliferation. The protein is Eukaryotic translation initiation factor 3 subunit A of Eremothecium gossypii (strain ATCC 10895 / CBS 109.51 / FGSC 9923 / NRRL Y-1056) (Yeast).